The primary structure comprises 505 residues: MLFLNAKFIDLDLGANAVIVNEEDLKGTSYYPQDRVLIESHSGSVLGILYSTKTMVQKGEVGIPVRKMKGISLKEGEEVNLRHAEKPESIQFIKKKMDGQVLSPNEIRTIIDEIVSKKLSNIELAAFVTSTYVNGMNMEEIVEMTKRMAETGDMISWEKSLVVDIHSIGGVPGNKYALLSIPILAAAGITIPKTSSRAITSPAGTADVMEVLTNVELDEEELKRVVKATNGCLVWGGGVNLAPADDIIINVERPVSIDPQPQLLASVMAKKVATGIKYAVIDIPVGKGVKIKNEAEGAKLARKFIELGELLNIRVECVLTYGGQPLGRAIGPALEAKEALEALTDPKSAPKSLIEKAISLAGILLELGGSAQIGDGQKLAWEILESGRALEKFNQIIVEQGGTPKKPEEIELGKYVEEVRSPIDGYIVGINNTSITNVVKEAGAPRDKKAGLLLNAKIGNKVKRGDILYTIYSGSEERLNSAVNLARRVYPVNVEGMMIERISKF.

AMP is bound by residues Gly-170, 196–201 (SRAITS), and Thr-205. Asp-258 serves as the catalytic Proton donor. AMP contacts are provided by Ser-266 and Lys-290.

This sequence belongs to the thymidine/pyrimidine-nucleoside phosphorylase family. Type 2 subfamily.

The catalysed reaction is AMP + phosphate = alpha-D-ribose 1,5-bisphosphate + adenine. The enzyme catalyses CMP + phosphate = cytosine + alpha-D-ribose 1,5-bisphosphate. It catalyses the reaction UMP + phosphate = alpha-D-ribose 1,5-bisphosphate + uracil. In terms of biological role, catalyzes the conversion of AMP and phosphate to adenine and ribose 1,5-bisphosphate (R15P). Exhibits phosphorylase activity toward CMP and UMP in addition to AMP. Functions in an archaeal AMP degradation pathway, together with R15P isomerase and RubisCO. The sequence is that of AMP phosphorylase from Methanococcus vannielii (strain ATCC 35089 / DSM 1224 / JCM 13029 / OCM 148 / SB).